The primary structure comprises 199 residues: ATP-dependent Clp protease proteolytic subunit (199 aa).

S97 functions as the Nucleophile in the catalytic mechanism. H122 is a catalytic residue.

Belongs to the peptidase S14 family. In terms of assembly, fourteen ClpP subunits assemble into 2 heptameric rings which stack back to back to give a disk-like structure with a central cavity, resembling the structure of eukaryotic proteasomes.

The protein resides in the cytoplasm. It catalyses the reaction Hydrolysis of proteins to small peptides in the presence of ATP and magnesium. alpha-casein is the usual test substrate. In the absence of ATP, only oligopeptides shorter than five residues are hydrolyzed (such as succinyl-Leu-Tyr-|-NHMec, and Leu-Tyr-Leu-|-Tyr-Trp, in which cleavage of the -Tyr-|-Leu- and -Tyr-|-Trp bonds also occurs).. In terms of biological role, cleaves peptides in various proteins in a process that requires ATP hydrolysis. Has a chymotrypsin-like activity. Plays a major role in the degradation of misfolded proteins. The sequence is that of ATP-dependent Clp protease proteolytic subunit from Geobacter sulfurreducens (strain ATCC 51573 / DSM 12127 / PCA).